The following is a 223-amino-acid chain: Glutathione-specific gamma-glutamylcyclotransferase 1 (223 aa).

Residues 1-26 are disordered; that stretch reads MKQESASQSTPPPSLSPAPSSAQPSW. Residue 36–41 coordinates substrate; it reads IFGYGS. E116 acts as the Proton acceptor in catalysis.

It belongs to the gamma-glutamylcyclotransferase family. ChaC subfamily. In terms of assembly, interacts with NOTCH1 (via extracellular region). In terms of tissue distribution, widely expressed, with high expression in forebrain and anterior spinal cord. Expressed at intermediate level in the dorsal aorta and heart. Present throughout adult brain (at protein level).

It localises to the cytoplasm. Its subcellular location is the cytosol. The protein localises to the golgi apparatus. It is found in the trans-Golgi network. It catalyses the reaction glutathione = L-cysteinylglycine + 5-oxo-L-proline. Catalyzes the cleavage of glutathione into 5-oxo-L-proline and a Cys-Gly dipeptide. Acts specifically on glutathione, but not on other gamma-glutamyl peptides. Glutathione depletion is an important factor for apoptosis initiation and execution. Acts as a pro-apoptotic component of the unfolded protein response pathway by mediating the pro-apoptotic effects of the ATF4-ATF3-DDIT3/CHOP cascade. Negative regulator of Notch signaling pathway involved in embryonic neurogenesis: acts by inhibiting Notch cleavage by furin, maintaining Notch in an immature inactive form, thereby promoting neurogenesis in embryos. The protein is Glutathione-specific gamma-glutamylcyclotransferase 1 of Mus musculus (Mouse).